The chain runs to 165 residues: Destrin (165 aa).

Ala2 is modified (N-acetylalanine). Ser3 is subject to Phosphoserine. The region spanning Gly4 to Gly153 is the ADF-H domain. Lys19 carries the N6-acetyllysine modification. A Nuclear localization signal motif is present at residues Lys30–Lys34.

The protein belongs to the actin-binding proteins ADF family. In terms of processing, ISGylated.

In terms of biological role, actin-depolymerizing protein. Severs actin filaments (F-actin) and binds to actin monomers (G-actin). Acts in a pH-independent manner. The sequence is that of Destrin (Dstn) from Rattus norvegicus (Rat).